The following is a 230-amino-acid chain: MERRGRATEAFFGRRKGKALREQQAETLNSLLPAFLIDLSAAPPEPLTSLFPVPVTTLRLEIGFGGGEHLIHRALERPSTGFIGVEPFVNSMQKLLARAGQTGARNIRVYNDDATQLLDWLPDASLDQIDLLYPDPWPKRKHWKRRFVSKTNLDRFHRVLKPGGLFCFASDIDTYVNWTLLKCRDHSGFDWIADNAADWLTPYEGWPSTRYEAKARREGRSSAYLTFRKI.

Positions 61, 86, 113, and 135 each coordinate S-adenosyl-L-methionine. Asp135 is a catalytic residue. Residues Lys139, Asp171, and 209–212 (TRYE) each bind substrate.

It belongs to the class I-like SAM-binding methyltransferase superfamily. TrmB family.

It carries out the reaction guanosine(46) in tRNA + S-adenosyl-L-methionine = N(7)-methylguanosine(46) in tRNA + S-adenosyl-L-homocysteine. The protein operates within tRNA modification; N(7)-methylguanine-tRNA biosynthesis. Its function is as follows. Catalyzes the formation of N(7)-methylguanine at position 46 (m7G46) in tRNA. The polypeptide is tRNA (guanine-N(7)-)-methyltransferase (Rhizobium etli (strain ATCC 51251 / DSM 11541 / JCM 21823 / NBRC 15573 / CFN 42)).